Reading from the N-terminus, the 326-residue chain is Thiazole synthase (326 aa).

Lysine 168 acts as the Schiff-base intermediate with DXP in catalysis. Residues glycine 229, 255–256 (AG), and 277–278 (NT) each bind 1-deoxy-D-xylulose 5-phosphate.

It belongs to the ThiG family. In terms of assembly, homotetramer. Forms heterodimers with either ThiH or ThiS.

It localises to the cytoplasm. The enzyme catalyses [ThiS sulfur-carrier protein]-C-terminal-Gly-aminoethanethioate + 2-iminoacetate + 1-deoxy-D-xylulose 5-phosphate = [ThiS sulfur-carrier protein]-C-terminal Gly-Gly + 2-[(2R,5Z)-2-carboxy-4-methylthiazol-5(2H)-ylidene]ethyl phosphate + 2 H2O + H(+). The protein operates within cofactor biosynthesis; thiamine diphosphate biosynthesis. Catalyzes the rearrangement of 1-deoxy-D-xylulose 5-phosphate (DXP) to produce the thiazole phosphate moiety of thiamine. Sulfur is provided by the thiocarboxylate moiety of the carrier protein ThiS. In vitro, sulfur can be provided by H(2)S. The protein is Thiazole synthase of Magnetococcus marinus (strain ATCC BAA-1437 / JCM 17883 / MC-1).